A 1010-amino-acid polypeptide reads, in one-letter code: Collagen, type I, alpha 1b (1010 aa).

Residues 1–24 show a composition bias toward pro residues; sequence SSGPPQPGPMGPMGPRGPPGPPGS. The segment at 1 to 969 is disordered; the sequence is SSGPPQPGPM…PDGTQKSPAR (969 aa). The span at 25-48 shows a compositional bias: low complexity; the sequence is SGPQGFTGPPGEPGEPGASGAMGS. A compositionally biased stretch (basic and acidic residues) spans 58–72; sequence NGDDGEPGKPGRPGE. A compositionally biased stretch (low complexity) spans 73–82; that stretch reads RGAAGPQGAR. Positions 145-159 are enriched in pro residues; the sequence is GGPPGPTGPAGPPGF. 2 stretches are compositionally biased toward gly residues: residues 160–179 and 203–212; these read PGGA…GNEG and GTDGGPGAKG. Composition is skewed to low complexity over residues 213-268 and 300-310; these read SPGA…PGPA and ERGAPGARGFP. Residues 311–323 are compositionally biased toward gly residues; it reads GADGGAGGKGAPG. Low complexity-rich tracts occupy residues 324 to 343 and 405 to 448; these read ERGA…PGSK and PAGA…APGE. Composition is skewed to gly residues over residues 468–477, 486–495, and 519–528; these read GAPGLGGPTG, GAPGGLGAPG, and GGKGGDGAPG. 2 stretches are compositionally biased toward low complexity: residues 559 to 568 and 581 to 596; these read VAGPTGPRGA and AGFA…PGAK. Gly residues-rich tracts occupy residues 609–618 and 633–642; these read GAPGPGGPVG and GARGGAGPPG. Low complexity-rich tracts occupy residues 643–662, 679–701, and 796–805; these read ATGF…AGAA, ETGA…SGEK, and APGAVGPSGK. Residues 834–847 are compositionally biased toward basic and acidic residues; it reads KGDRGEAGEAGDRG. A compositionally biased stretch (low complexity) spans 872–900; the sequence is PAGASGPAGPRGPAGSNGAAGKDGMNGLP. Residues 918–933 are compositionally biased toward pro residues; it reads AGPPGPPGPAGPPGPP. The Fibrillar collagen NC1 domain maps to 982 to 1010; that stretch reads RLPLLDLAPMDVGAPDQEFGVEVGPVCFL.

Belongs to the fibrillar collagen family.

It is found in the secreted. The protein localises to the extracellular space. The protein resides in the extracellular matrix. This Epinephelus marginatus (Dusky grouper) protein is Collagen, type I, alpha 1b.